A 206-amino-acid chain; its full sequence is Small ribosomal subunit protein uS4 (206 aa).

Positions 18-46 are disordered; that stretch reads NIWGRPKSPVNRREYGPGQHGQRRKGKIS. One can recognise an S4 RNA-binding domain in the interval 94-154; the sequence is RRLDAVVYRA…DRSKQMVALI (61 aa).

The protein belongs to the universal ribosomal protein uS4 family. Part of the 30S ribosomal subunit. Contacts protein S5. The interaction surface between S4 and S5 is involved in control of translational fidelity.

Its function is as follows. One of the primary rRNA binding proteins, it binds directly to 16S rRNA where it nucleates assembly of the body of the 30S subunit. Functionally, with S5 and S12 plays an important role in translational accuracy. The sequence is that of Small ribosomal subunit protein uS4 from Roseobacter denitrificans (strain ATCC 33942 / OCh 114) (Erythrobacter sp. (strain OCh 114)).